The sequence spans 244 residues: Ribonuclease PH (244 aa).

Phosphate-binding positions include arginine 86 and 124-126 (GTR).

Belongs to the RNase PH family. As to quaternary structure, homohexameric ring arranged as a trimer of dimers.

It carries out the reaction tRNA(n+1) + phosphate = tRNA(n) + a ribonucleoside 5'-diphosphate. Functionally, phosphorolytic 3'-5' exoribonuclease that plays an important role in tRNA 3'-end maturation. Removes nucleotide residues following the 3'-CCA terminus of tRNAs; can also add nucleotides to the ends of RNA molecules by using nucleoside diphosphates as substrates, but this may not be physiologically important. Probably plays a role in initiation of 16S rRNA degradation (leading to ribosome degradation) during starvation. This chain is Ribonuclease PH, found in Oceanobacillus iheyensis (strain DSM 14371 / CIP 107618 / JCM 11309 / KCTC 3954 / HTE831).